Here is a 242-residue protein sequence, read N- to C-terminus: Uridylate kinase (242 aa).

16–19 contributes to the ATP binding site; that stretch reads KISG. The segment at 24-29 is involved in allosteric activation by GTP; that stretch reads GDQGFG. Gly-58 is a UMP binding site. Residues Gly-59 and Arg-63 each coordinate ATP. Residues Asp-78 and 139–146 each bind UMP; that span reads TGNPYFTT. Residues Thr-166, Tyr-172, and Asp-175 each coordinate ATP.

It belongs to the UMP kinase family. As to quaternary structure, homohexamer.

The protein resides in the cytoplasm. It catalyses the reaction UMP + ATP = UDP + ADP. It functions in the pathway pyrimidine metabolism; CTP biosynthesis via de novo pathway; UDP from UMP (UMPK route): step 1/1. Allosterically activated by GTP. Inhibited by UTP. Its function is as follows. Catalyzes the reversible phosphorylation of UMP to UDP. In Roseobacter denitrificans (strain ATCC 33942 / OCh 114) (Erythrobacter sp. (strain OCh 114)), this protein is Uridylate kinase.